Here is a 478-residue protein sequence, read N- to C-terminus: Kynureninase (478 aa).

Pyridoxal 5'-phosphate is bound by residues Leu-138, Thr-139, 166–169, Asp-252, His-255, and Tyr-277; that span reads FPSD. Lys-278 is modified (N6-(pyridoxal phosphate)lysine). Pyridoxal 5'-phosphate is bound by residues Trp-315 and Asn-343.

It belongs to the kynureninase family. Homodimer. Requires pyridoxal 5'-phosphate as cofactor.

It localises to the cytoplasm. The enzyme catalyses L-kynurenine + H2O = anthranilate + L-alanine + H(+). It carries out the reaction 3-hydroxy-L-kynurenine + H2O = 3-hydroxyanthranilate + L-alanine + H(+). It functions in the pathway amino-acid degradation; L-kynurenine degradation; L-alanine and anthranilate from L-kynurenine: step 1/1. Its pathway is cofactor biosynthesis; NAD(+) biosynthesis; quinolinate from L-kynurenine: step 2/3. Its function is as follows. Catalyzes the cleavage of L-kynurenine (L-Kyn) and L-3-hydroxykynurenine (L-3OHKyn) into anthranilic acid (AA) and 3-hydroxyanthranilic acid (3-OHAA), respectively. This is Kynureninase from Coccidioides immitis (strain RS) (Valley fever fungus).